The following is a 483-amino-acid chain: Probable glycine dehydrogenase (decarboxylating) subunit 2 (483 aa).

Lysine 264 bears the N6-(pyridoxal phosphate)lysine mark.

It belongs to the GcvP family. C-terminal subunit subfamily. The glycine cleavage system is composed of four proteins: P, T, L and H. In this organism, the P 'protein' is a heterodimer of two subunits. It depends on pyridoxal 5'-phosphate as a cofactor.

It catalyses the reaction N(6)-[(R)-lipoyl]-L-lysyl-[glycine-cleavage complex H protein] + glycine + H(+) = N(6)-[(R)-S(8)-aminomethyldihydrolipoyl]-L-lysyl-[glycine-cleavage complex H protein] + CO2. The glycine cleavage system catalyzes the degradation of glycine. The P protein binds the alpha-amino group of glycine through its pyridoxal phosphate cofactor; CO(2) is released and the remaining methylamine moiety is then transferred to the lipoamide cofactor of the H protein. In Nitrosomonas eutropha (strain DSM 101675 / C91 / Nm57), this protein is Probable glycine dehydrogenase (decarboxylating) subunit 2.